Reading from the N-terminus, the 365-residue chain is uncharacterized protein (365 aa).

3 helical membrane passes run 105–125 (TGNWFLVILFLALLWLRQCWL), 151–171 (ILTTLVTVGTTLGTPVFSLTI), and 187–207 (IFLIIFSVFSISLGLVSSLIF).

The protein resides in the cell membrane. This is an uncharacterized protein from Mycoplasma genitalium (strain ATCC 33530 / DSM 19775 / NCTC 10195 / G37) (Mycoplasmoides genitalium).